The chain runs to 445 residues: UPF0761 membrane protein Mlg_0521 (445 aa).

The next 6 helical transmembrane spans lie at 56–76 (LLAL…FPVF), 112–132 (GLTV…MAAI), 152–172 (FMVY…SLGI), 195–215 (LLAG…YAAV), 225–245 (ALLG…GFGW), and 259–279 (ALAA…VVLV).

It belongs to the UPF0761 family.

The protein resides in the cell inner membrane. This is UPF0761 membrane protein Mlg_0521 from Alkalilimnicola ehrlichii (strain ATCC BAA-1101 / DSM 17681 / MLHE-1).